The sequence spans 335 residues: UPF0353 protein MMAR_2288 (335 aa).

The next 2 membrane-spanning stretches (helical) occupy residues 18–38 (WFFL…VLQL) and 67–87 (IPAM…AGPT). The 197-residue stretch at 98 to 294 (VVMLVIDVSQ…AELNSVYASL (197 aa)) folds into the VWFA domain. Residues 309–329 (MGWLRLGALVLVAAALAALLI) traverse the membrane as a helical segment.

The protein belongs to the UPF0353 family.

It localises to the cell membrane. This chain is UPF0353 protein MMAR_2288, found in Mycobacterium marinum (strain ATCC BAA-535 / M).